Consider the following 217-residue polypeptide: 3,4-dihydroxy-2-butanone 4-phosphate synthase (217 aa).

Residues 40-41 (RE), Asp-45, 153-157 (RRGHT), and Glu-177 contribute to the D-ribulose 5-phosphate site. Glu-41 is a binding site for Mg(2+). His-156 contacts Mg(2+).

It belongs to the DHBP synthase family. As to quaternary structure, homodimer. Mg(2+) is required as a cofactor. It depends on Mn(2+) as a cofactor.

It carries out the reaction D-ribulose 5-phosphate = (2S)-2-hydroxy-3-oxobutyl phosphate + formate + H(+). The protein operates within cofactor biosynthesis; riboflavin biosynthesis; 2-hydroxy-3-oxobutyl phosphate from D-ribulose 5-phosphate: step 1/1. Its function is as follows. Catalyzes the conversion of D-ribulose 5-phosphate to formate and 3,4-dihydroxy-2-butanone 4-phosphate. The sequence is that of 3,4-dihydroxy-2-butanone 4-phosphate synthase from Aliivibrio fischeri (Vibrio fischeri).